Here is a 467-residue protein sequence, read N- to C-terminus: Plasma alpha-L-fucosidase (467 aa).

An N-terminal signal peptide occupies residues 1–28 (MRPQELPRLAFPLLLLLLLLLPPPPCPA). N-linked (GlcNAc...) asparagine glycosylation is found at asparagine 171 and asparagine 239. Serine 301 is subject to Phosphoserine; by FAM20C. Asparagine 377 is a glycosylation site (N-linked (GlcNAc...) asparagine).

It belongs to the glycosyl hydrolase 29 family. In terms of assembly, homotetramer.

It localises to the secreted. The enzyme catalyses an alpha-L-fucoside + H2O = L-fucose + an alcohol. In terms of biological role, alpha-L-fucosidase is responsible for hydrolyzing the alpha-1,6-linked fucose joined to the reducing-end N-acetylglucosamine of the carbohydrate moieties of glycoproteins. In Homo sapiens (Human), this protein is Plasma alpha-L-fucosidase (FUCA2).